We begin with the raw amino-acid sequence, 801 residues long: MDTLTNSQDYSNVDLSLESLAEELYNIQSFNKDVILDSFDIDDYDHTQLDTTIDFNKFKIGLTILKISSKGKPQKKKLIFDLARNQIVCGKKKKVNFSEIDEIRVGHKTNIFNQFKSSKNLKEDIESIQQSFSILFSGNLRKTMDFVCSDIPERRQIVSALYHVVQESKSVNNEYNFVKREWDRVGKDSIDFSTLKKILARLNFTTSDAVLHNLMKFSDSNSDYHLDFSEFSNLLKLLRSHPEMKPVFYKYNGGNGEWVPIQGMIDFFRIEQSEVWTVEQCRDLIKKYHHERLDCISFENFEEFICGEANLAQYPHTSTVYQDTSKPLSYYFINSSHNTYLSGHQLKGLSTSEMYTNTLRQGCKCVELDVWDGNDGDPIIFHGNTLTSQIKFSHVCETIKARGFETSPYPVILSLEVHCSVPQQIMMANHMKEIFGEMLPTPLPEGTKELPTLDSLKYKILLKGHTSHTHVSAVGNSSASSSQSNIQTDDNDDDGAVDLTEYDEVDDRSASSSSSSFSLSFGSSGKKKKITKIKIAPEFEELIYLVSHGFKSGNTTKEIPSYKIHSLVEEKVKQLVQSEPREVVEASQNHLLRVYPRGTRFDSSNFDPMPGWSIGCQLAALNQQTSSEPMWINDGMFSDNGGCGYVLKPPCLLPGECETYDPTSPERIKSSKYSRLIVNVISARQLPKYTKSTKGEVIDPYVTLSIVGTHFDQKVEKTKVIDNNGFNPHWGEEFEFPLYNSQLSMLLIRVDDKDKVGHNRIGHHCIRVENIRPGYRILKLKNNFNRTIPLANLLCKFTFVE.

The 36-residue stretch at 206–241 (TSDAVLHNLMKFSDSNSDYHLDFSEFSNLLKLLRSH) folds into the EF-hand domain. One can recognise a PI-PLC X-box domain in the interval 322-464 (QDTSKPLSYY…SLKYKILLKG (143 aa)). Catalysis depends on residues His337 and His382. Position 463 (Lys463) interacts with substrate. Positions 471 to 485 (VSAVGNSSASSSQSN) are enriched in low complexity. The tract at residues 471–523 (VSAVGNSSASSSQSNIQTDDNDDDGAVDLTEYDEVDDRSASSSSSSFSLSFGS) is disordered. Residues 489–506 (DDNDDDGAVDLTEYDEVD) show a composition bias toward acidic residues. Ca(2+)-binding residues include Asp490, Asp492, Asp494, and Glu501. A compositionally biased stretch (low complexity) spans 510-523 (ASSSSSSFSLSFGS). Ser524 carries the post-translational modification Phosphoserine. Thr531 is subject to Phosphothreonine; by PKA and PKG. The 111-residue stretch at 542 to 652 (LIYLVSHGFK…CGYVLKPPCL (111 aa)) folds into the PI-PLC Y-box domain. 2 residues coordinate substrate: Ser566 and Arg593. The C2 domain maps to 656 to 781 (ECETYDPTSP…RPGYRILKLK (126 aa)).

It catalyses the reaction a 1,2-diacyl-sn-glycero-3-phospho-(1D-myo-inositol-4,5-bisphosphate) + H2O = 1D-myo-inositol 1,4,5-trisphosphate + a 1,2-diacyl-sn-glycerol + H(+). In terms of biological role, the production of the second messenger molecules diacylglycerol (DAG) and inositol 1,4,5-trisphosphate (IP3) is mediated by activated phosphatidylinositol-specific phospholipase C enzymes. The sequence is that of 1-phosphatidylinositol 4,5-bisphosphate phosphodiesterase (plc) from Dictyostelium discoideum (Social amoeba).